The following is a 242-amino-acid chain: Zinc import ATP-binding protein ZnuC (242 aa).

Residues 24-241 (INVENLSFFY…EKFLKMFSSY (218 aa)) enclose the ABC transporter domain. 56–63 (GPNGGGKT) is an ATP binding site.

Belongs to the ABC transporter superfamily. Zinc importer (TC 3.A.1.15.5) family. In terms of assembly, the complex is composed of two ATP-binding proteins (ZnuC), two transmembrane proteins (ZnuB) and a solute-binding protein (ZnuA).

It is found in the cell inner membrane. It carries out the reaction Zn(2+)(out) + ATP(in) + H2O(in) = Zn(2+)(in) + ADP(in) + phosphate(in) + H(+)(in). Part of the ABC transporter complex ZnuABC involved in zinc import. Responsible for energy coupling to the transport system. This Ehrlichia chaffeensis (strain ATCC CRL-10679 / Arkansas) protein is Zinc import ATP-binding protein ZnuC.